The sequence spans 1028 residues: Sporulation-specific protein 3 (1028 aa).

It is found in the prospore membrane. Functionally, has a role in spore morphogenesis. Involved in the assembly of the forespore membrane. This Schizosaccharomyces pombe (strain 972 / ATCC 24843) (Fission yeast) protein is Sporulation-specific protein 3 (spo3).